The chain runs to 391 residues: Secreted aspartic protease 1 (391 aa).

The N-terminal stretch at 1–18 (MFLKNIFIALAIALLVDA) is a signal peptide. The propeptide at 19 to 50 (SPAKRSPGFVTLDFDVIKTPVNATGQEGKVKR) is activation peptide. N-linked (GlcNAc...) asparagine glycosylation occurs at Asn-40. The Peptidase A1 domain occupies 64-377 (YAADITIGSN…DLDDDKISLA (314 aa)). Residue Asp-82 is part of the active site. 82 to 84 (DTG) contacts pepstatin A. An intrachain disulfide couples Cys-97 to Cys-109. 135 to 136 (GD) lines the pepstatin A pocket. Zn(2+) contacts are provided by Asp-241 and Asp-263. Residue Asp-267 is part of the active site. A pepstatin A-binding site is contributed by 267–271 (DSGTT). A disulfide bridge links Cys-305 with Cys-343.

This sequence belongs to the peptidase A1 family. In terms of assembly, monomer.

The protein localises to the secreted. The catalysed reaction is Preferential cleavage at the carboxyl of hydrophobic amino acids, but fails to cleave 15-Leu-|-Tyr-16, 16-Tyr-|-Leu-17 and 24-Phe-|-Phe-25 of insulin B chain. Activates trypsinogen, and degrades keratin.. Inhibited by pepstatin A analogs and squash aspartic peptidase inhibitor (SQAPI). Functionally, secreted aspartic peptidases (SAPs) are a group of ten acidic hydrolases considered as key virulence factors. These enzymes supply the fungus with nutrient amino acids as well as are able to degrade the selected host's proteins involved in the immune defense. Induces host inflammatory cytokine production in a proteolytic activity-independent way. Plays a role in tissue damage during superficial infection. Moreover, acts toward human hemoglobin though limited proteolysis to generate a variety of antimicrobial hemocidins, enabling to compete with the other microorganisms of the same physiological niche using the microbicidal peptides generated from the host protein. In terms of biological role, plays a key role in defense against host by cleaving histatin-5 (Hst 5), a peptide from human saliva that carries out fungicidal activity. The cleavage rate decreases in an order of SAP2 &gt; SAP9 &gt; SAP3 &gt; SAP7 &gt; SAP4 &gt; SAP1 &gt; SAP8. The first cleavage occurs between residues 'Lys-17' and 'His-18' of Hst 5, giving DSHAKRHHGYKRKFHEK and HHSHRGY peptides. Further fragmentation by SAP1 results in AKRHHGYKRKFHEK and AKRHHGY products. The sequence is that of Secreted aspartic protease 1 from Candida albicans (strain SC5314 / ATCC MYA-2876) (Yeast).